The primary structure comprises 744 residues: NAD(P)H-quinone oxidoreductase subunit 5, chloroplastic (744 aa).

Transmembrane regions (helical) follow at residues 9-29, 40-60, 89-109, 125-145, 147-167, 185-205, 219-239, 258-278, 290-312, 327-347, 354-374, 396-416, 425-445, 549-569, 608-628, and 724-744; these read WIIP…LLFF, WAFQ…NLSI, IDPL…MVLI, FAYM…SNLI, IYIF…FWFT, GDFG…SFEF, NEVN…GAIA, TPIS…FLVA, IMNF…ALAQ, LGYM…FHLI, ALLF…VGYC, TSFF…CFWS, WLYS…TAFY, LFPI…GIPF, VFSV…YKPV, and YLFF…FFHF.

This sequence belongs to the complex I subunit 5 family. In terms of assembly, NDH is composed of at least 16 different subunits, 5 of which are encoded in the nucleus.

The protein resides in the plastid. It is found in the chloroplast thylakoid membrane. The catalysed reaction is a plastoquinone + NADH + (n+1) H(+)(in) = a plastoquinol + NAD(+) + n H(+)(out). It catalyses the reaction a plastoquinone + NADPH + (n+1) H(+)(in) = a plastoquinol + NADP(+) + n H(+)(out). Its function is as follows. NDH shuttles electrons from NAD(P)H:plastoquinone, via FMN and iron-sulfur (Fe-S) centers, to quinones in the photosynthetic chain and possibly in a chloroplast respiratory chain. The immediate electron acceptor for the enzyme in this species is believed to be plastoquinone. Couples the redox reaction to proton translocation, and thus conserves the redox energy in a proton gradient. This Gerbera jamesonii (Transvaal daisy) protein is NAD(P)H-quinone oxidoreductase subunit 5, chloroplastic (ndhF).